Consider the following 786-residue polypeptide: Protein SEY1 (786 aa).

Residues 1–684 lie on the Cytoplasmic side of the membrane; it reads MSDLKEAIQL…KRSIVNTTER (684 aa). In terms of domain architecture, GB1/RHD3-type G spans 35 to 262; the sequence is GVKYHVISVF…QDASFFKDEY (228 aa). 45 to 52 is a binding site for GTP; that stretch reads GSQSSGKS. Positions 355-375 form a coiled coil; sequence KKVYEERRDDLIKQLNTIIDE. A helical transmembrane segment spans residues 685 to 705; sequence IPLYMYALVVALGWGRIITIL. The Lumenal portion of the chain corresponds to 706-708; that stretch reads RNP. The chain crosses the membrane as a helical span at residues 709-729; sequence ATIILSIIVLAGAYFVHKLNL. The Cytoplasmic portion of the chain corresponds to 730–786; that stretch reads WGPLLQFANQATGQATAVLKQTVRSLVVDEEPKRKILVEPHESEGVDKEPSKNDQHL. The interval 765-786 is disordered; it reads ILVEPHESEGVDKEPSKNDQHL.

The protein belongs to the TRAFAC class dynamin-like GTPase superfamily. GB1/RHD3 GTPase family. RHD3 subfamily.

It is found in the endoplasmic reticulum membrane. Cooperates with the reticulon proteins and tubule-shaping DP1 family proteins to generate and maintain the structure of the tubular endoplasmic reticulum network. Has GTPase activity, which is required for its function in ER organization. The chain is Protein SEY1 from Kluyveromyces lactis (strain ATCC 8585 / CBS 2359 / DSM 70799 / NBRC 1267 / NRRL Y-1140 / WM37) (Yeast).